The following is a 161-amino-acid chain: Troponin C, slow skeletal and cardiac muscles (161 aa).

The residue at position 1 (Met1) is an N-acetylmethionine. EF-hand domains follow at residues 16–51 (QKNEFKAAFDIFVLGAEDGCISTKELGKVMRMLGQN), 52–87 (PTPEELQEMIDEVDEDGSGTVDFDEFLVMMVRCMKD), 92–127 (KSEEELSDLFRMFDKNADGYIDLDELKMMLQATGET), and 128–161 (ITEDDIEELMKDGDKNNDGRIDYDEFLEFMKGVE). Residues Asp65, Asp67, Ser69, Thr71, and Glu76 each contribute to the Ca(2+) site. Position 98 is a phosphoserine (Ser98). Residues Asp105, Asn107, Asp109, Tyr111, Glu116, Asp141, Asn143, Asp145, Arg147, and Glu152 each contribute to the Ca(2+) site.

Belongs to the troponin C family.

Functionally, troponin is the central regulatory protein of striated muscle contraction. Tn consists of three components: Tn-I which is the inhibitor of actomyosin ATPase, Tn-T which contains the binding site for tropomyosin and Tn-C. The binding of calcium to Tn-C abolishes the inhibitory action of Tn on actin filaments. This is Troponin C, slow skeletal and cardiac muscles (Tnnc1) from Mus musculus (Mouse).